The primary structure comprises 156 residues: Ribonuclease pancreatic (156 aa).

Residues 1–28 form the signal peptide; the sequence is MALEKSLALLPLLVLVLLVLGWVQPSLG. The segment covering 33–43 has biased composition (basic and acidic residues); the sequence is AKKFQRQHMDS. The disordered stretch occupies residues 33-52; that stretch reads AKKFQRQHMDSDGSPSSNPT. Positions 35 and 38 each coordinate substrate. H40 (proton acceptor) is an active-site residue. Cystine bridges form between C54/C112, C68/C123, C86/C138, and C93/C100. N62 carries an N-linked (GlcNAc...) asparagine glycan. Residues 69–73, K94, and R113 each bind substrate; that span reads KPVNT. N-linked (GlcNAc...) asparagine glycosylation occurs at N116. H147 functions as the Proton donor in the catalytic mechanism.

It belongs to the pancreatic ribonuclease family. In terms of assembly, monomer. Interacts with and forms tight 1:1 complexes with RNH1. Dimerization of two such complexes may occur. Interaction with RNH1 inhibits this protein.

It is found in the secreted. It carries out the reaction an [RNA] containing cytidine + H2O = an [RNA]-3'-cytidine-3'-phosphate + a 5'-hydroxy-ribonucleotide-3'-[RNA].. The enzyme catalyses an [RNA] containing uridine + H2O = an [RNA]-3'-uridine-3'-phosphate + a 5'-hydroxy-ribonucleotide-3'-[RNA].. Its function is as follows. Endonuclease that catalyzes the cleavage of RNA on the 3' side of pyrimidine nucleotides. Acts on single-stranded and double-stranded RNA. The chain is Ribonuclease pancreatic (RNASE1) from Saimiri sciureus (Common squirrel monkey).